Reading from the N-terminus, the 311-residue chain is Replicative helicase loader DnaI (311 aa).

The interval Met-1 to Ile-136 is N-terminal domain (Nd). Residues Cys-67, Cys-70, His-84, and Cys-101 each coordinate Zn(2+). Residues Ser-137 to Pro-311 are C-terminal domain (Cd). Gly-168–Thr-175 contacts ATP.

Belongs to the DnaI family. As to quaternary structure, the DNA replisome assembles sequentially on oriC in this order; DnaA, DnaD, DnaB, DnaI-DnaC helicase. Monomer with a very minor amount of dimer in solution. Interacts with replicative helicase (from G.stearothermophilus, called DnaB); this interaction is disrupted by DnaD. Interacts with replicative helicase DnaC, forms a DnaC(6):DnaI(6) complex. Interacts with the helicase as 3 dimers. A stable complex with DnaG primase, DnaI(6):helicase(6):DnaG(3) fragment can be isolated; DnaI and DnaG do not contact each other (helicase and DnaG in this complex are derived from G.stearothermophilus). Zn(2+) serves as cofactor.

Its subcellular location is the cytoplasm. It catalyses the reaction ATP + H2O = ADP + phosphate + H(+). Functionally, helps load the DnaC replicative helicase onto single-stranded (ss)DNA and simulates the helicase activity; in the presence of DnaB more helicase activity is seen. Regulates DnaC helicase activity, at low concentrations stimulates the DNA helicase and ATPase activities of DnaC. Has no measurable ATPase activity after 1 hour incubation of 6 uM DnaI with or without DNA. Another group has found the protein has weak ATPase activity that is not stimulated by ssDNA. Whole protein binds forked DNA (but not ssDNA) weakly; ATP and ADPNP (probably 5'-adenylyl beta, gamma-imidodiphosphate) have no effect on DNA binding. DnaB, DnaD and DnaI may be required for a PriA-independent pathway of replication fork restart. The sequence is that of Replicative helicase loader DnaI from Bacillus subtilis (strain 168).